The primary structure comprises 83 residues: Toxin CjTL8 (83 aa).

The signal sequence occupies residues 1-20; that stretch reads MSSAIKILALLMVLVALAQA. A propeptide spanning residues 21-44 is cleaved from the precursor; sequence KPRKDYRAYPDFDDKSVILEDDKR. Phe-81 bears the Phenylalanine amide mark.

In terms of processing, contains 3 disulfide bonds.

It is found in the secreted. It localises to the nematocyst. Its function is as follows. In vivo, induces immediate paralysis on shrimps (C.multidentata), followed by death when high doses are injected. No activity is observed when injected into fly larvae (M.domestica). In Epiactis japonica (Sea anemone), this protein is Toxin CjTL8.